A 227-amino-acid polypeptide reads, in one-letter code: uncharacterized protein (227 aa).

An RCK N-terminal domain is found at 3–119 (RADFCIIGLG…STMGIREALI (117 aa)). Residues 134 to 221 (HGLENEIINL…LNKYLNYINP (88 aa)) enclose the RCK C-terminal domain.

This is an uncharacterized protein from Mycoplasma genitalium (strain ATCC 33530 / DSM 19775 / NCTC 10195 / G37) (Mycoplasmoides genitalium).